Reading from the N-terminus, the 1592-residue chain is Laminin subunit gamma-1 (1592 aa).

The first 19 residues, 1-19, serve as a signal peptide directing secretion; the sequence is MRAPVLAVLAVLLLGTVRA. The Laminin N-terminal domain maps to 29-268; that stretch reads SPQRCMPEFV…AISDFAVGGR (240 aa). Asn43 and Asn117 each carry an N-linked (GlcNAc...) asparagine glycan. 16 disulfide bridges follow: Cys269–Cys278, Cys271–Cys288, Cys290–Cys299, Cys302–Cys322, Cys325–Cys334, Cys327–Cys350, Cys353–Cys362, Cys365–Cys378, Cys381–Cys393, Cys383–Cys399, Cys401–Cys410, Cys413–Cys425, Cys428–Cys439, Cys430–Cys446, Cys448–Cys457, and Cys460–Cys475. 4 Laminin EGF-like domains span residues 269–324, 325–380, 381–427, and 428–477; these read CKCN…ECLP, CNCN…PCHA, CQCN…GCRP, and CACN…GCTP. The 169-residue stretch at 504–672 folds into the Laminin IV type A domain; it reads SGVEGWTAQQ…AGPSAPWVEI (169 aa). N-linked (GlcNAc...) asparagine glycans are attached at residues Asn559 and Asn633. 24 cysteine pairs are disulfide-bonded: Cys707/Cys716, Cys709/Cys723, Cys725/Cys734, Cys737/Cys753, Cys756/Cys764, Cys758/Cys775, Cys778/Cys787, Cys790/Cys808, Cys811/Cys825, Cys813/Cys832, Cys835/Cys844, Cys847/Cys864, Cys867/Cys881, Cys869/Cys888, Cys890/Cys899, Cys902/Cys915, Cys918/Cys930, Cys920/Cys937, Cys939/Cys948, Cys951/Cys963, Cys966/Cys978, Cys968/Cys984, Cys986/Cys995, and Cys998/Cys1011. Laminin EGF-like domains lie at 707–755, 756–810, 811–866, 867–917, 918–965, and 966–1013; these read CTCN…DCQP, CPCP…PCRI, CECS…KCRA, CSCN…GCER, CDCH…GCKP, and CDCD…GCQE. Asn1005, Asn1041, Asn1048, Asn1090, Asn1144, Asn1158, Asn1188, Asn1206, Asn1253, Asn1363, and Asn1386 each carry an N-linked (GlcNAc...) asparagine glycan. Residues 1013 to 1592 are domain II and I; sequence ECPACYRLVK…CYNTPIIEKP (580 aa). Residues 1018–1477 adopt a coiled-coil conformation; that stretch reads YRLVKDKVNE…DEKMAEMASN (460 aa). Residues 1456 to 1472 show a composition bias toward basic and acidic residues; that stretch reads NQLKKKQAEAESDEKMA. The tract at residues 1456–1489 is disordered; that stretch reads NQLKKKQAEAESDEKMAEMASNATKDAESNANNS. A compositionally biased stretch (polar residues) spans 1476-1489; it reads SNATKDAESNANNS. 2 N-linked (GlcNAc...) asparagine glycosylation sites follow: Asn1477 and Asn1487. A coiled-coil region spans residues 1515–1579; sequence VGQLTVLEKT…ANLEDIKNTL (65 aa).

Laminin is a complex glycoprotein, consisting of three different polypeptide chains (alpha, beta, gamma), which are bound to each other by disulfide bonds into a cross-shaped molecule comprising one long and three short arms with globules at each end.

The protein localises to the secreted. The protein resides in the extracellular space. It localises to the extracellular matrix. Its subcellular location is the basement membrane. Functionally, binding to cells via a high affinity receptor, laminin is thought to mediate the attachment, migration and organization of cells into tissues during embryonic development by interacting with other extracellular matrix components. This is Laminin subunit gamma-1 (lamc1) from Xenopus tropicalis (Western clawed frog).